The following is a 21-amino-acid chain: uncharacterized protein (21 aa).

This is an uncharacterized protein from Haemophilus influenzae (strain ATCC 51907 / DSM 11121 / KW20 / Rd).